Consider the following 349-residue polypeptide: DCD domain-containing protein NRP (349 aa).

Positions 157–201 (NNNKNKGIDEDHQIQKGGKKNRKNQQNNNNQRNEDDKNNGLDKRF) are disordered. Residues 188–201 (RNEDDKNNGLDKRF) are compositionally biased toward basic and acidic residues. Positions 214 to 346 (ETIGGYIFVC…VLSLLDIFAD (133 aa)) constitute a DCD domain.

Interacts with CRY2 in the cytoplasm. Interacts with Verticillium dahliae PevD1. Interacts with FYPP3. In terms of tissue distribution, highly expressed in sensecent leaves, cauline leaves and sepals. Expressed in the shoot apical meristem, leaf veins, central cylinder, root hair zone, root tips, rosette leaves, flowers and siliques.

The protein resides in the cytoplasm. In terms of biological role, contributes to the initial phase of responses to abiotic and biotic stress signals. Binds FYPP3 and facilitates FYPP3 degradation to promote abscisic acid (ABA) response. The sequence is that of DCD domain-containing protein NRP from Arabidopsis thaliana (Mouse-ear cress).